The chain runs to 212 residues: 3-isopropylmalate dehydratase small subunit (212 aa).

Belongs to the LeuD family. LeuD type 1 subfamily. As to quaternary structure, heterodimer of LeuC and LeuD.

The enzyme catalyses (2R,3S)-3-isopropylmalate = (2S)-2-isopropylmalate. Its pathway is amino-acid biosynthesis; L-leucine biosynthesis; L-leucine from 3-methyl-2-oxobutanoate: step 2/4. Functionally, catalyzes the isomerization between 2-isopropylmalate and 3-isopropylmalate, via the formation of 2-isopropylmaleate. The sequence is that of 3-isopropylmalate dehydratase small subunit from Pseudomonas aeruginosa (strain LESB58).